A 279-amino-acid polypeptide reads, in one-letter code: Putative pyruvate, phosphate dikinase regulatory protein (279 aa).

An ADP-binding site is contributed by 153–160 (GVSRTSKT).

Belongs to the pyruvate, phosphate/water dikinase regulatory protein family. PDRP subfamily.

It carries out the reaction N(tele)-phospho-L-histidyl/L-threonyl-[pyruvate, phosphate dikinase] + ADP = N(tele)-phospho-L-histidyl/O-phospho-L-threonyl-[pyruvate, phosphate dikinase] + AMP + H(+). The catalysed reaction is N(tele)-phospho-L-histidyl/O-phospho-L-threonyl-[pyruvate, phosphate dikinase] + phosphate + H(+) = N(tele)-phospho-L-histidyl/L-threonyl-[pyruvate, phosphate dikinase] + diphosphate. In terms of biological role, bifunctional serine/threonine kinase and phosphorylase involved in the regulation of the pyruvate, phosphate dikinase (PPDK) by catalyzing its phosphorylation/dephosphorylation. The sequence is that of Putative pyruvate, phosphate dikinase regulatory protein from Bradyrhizobium diazoefficiens (strain JCM 10833 / BCRC 13528 / IAM 13628 / NBRC 14792 / USDA 110).